The primary structure comprises 355 residues: 5-formaminoimidazole-4-carboxamide-1-(beta)-D-ribofuranosyl 5'-monophosphate synthetase (355 aa).

2 residues coordinate 5-amino-1-(5-phospho-beta-D-ribosyl)imidazole-4-carboxamide: H27 and S94. Residues 101-332 (TESFAELAVP…YSDMIEENLS (232 aa)) enclose the ATP-grasp domain. ATP contacts are provided by residues 144–195 (PEKI…TRYY) and E225. Position 254 (N254) interacts with 5-amino-1-(5-phospho-beta-D-ribosyl)imidazole-4-carboxamide. Mg(2+)-binding residues include E292 and E305.

Belongs to the phosphohexose mutase family. Mg(2+) serves as cofactor. Requires Mn(2+) as cofactor.

The enzyme catalyses 5-amino-1-(5-phospho-beta-D-ribosyl)imidazole-4-carboxamide + formate + ATP = 5-formamido-1-(5-phospho-D-ribosyl)imidazole-4-carboxamide + ADP + phosphate. Its pathway is purine metabolism; IMP biosynthesis via de novo pathway; 5-formamido-1-(5-phospho-D-ribosyl)imidazole-4-carboxamide from 5-amino-1-(5-phospho-D-ribosyl)imidazole-4-carboxamide (formate route): step 1/1. In terms of biological role, catalyzes the ATP- and formate-dependent formylation of 5-aminoimidazole-4-carboxamide-1-beta-d-ribofuranosyl 5'-monophosphate (AICAR) to 5-formaminoimidazole-4-carboxamide-1-beta-d-ribofuranosyl 5'-monophosphate (FAICAR) in the absence of folates. This is 5-formaminoimidazole-4-carboxamide-1-(beta)-D-ribofuranosyl 5'-monophosphate synthetase from Methanococcoides burtonii (strain DSM 6242 / NBRC 107633 / OCM 468 / ACE-M).